The chain runs to 377 residues: Transmembrane protein 237A (377 aa).

3 stretches are compositionally biased toward basic and acidic residues: residues 1-11 (MCVTSRADKMP), 43-64 (LESR…DNPP), and 74-87 (HTFE…DHPN). Residues 1 to 124 (MCVTSRADKM…NQSHNELGVE (124 aa)) form a disordered region. 4 consecutive transmembrane segments (helical) span residues 198-218 (IIGL…IIVV), 239-259 (LAYP…VSAF), 273-293 (GFLT…ALIL), and 326-346 (PWIV…VFVA).

This sequence belongs to the TMEM237 family.

It localises to the membrane. The protein resides in the cell projection. It is found in the cilium. Its function is as follows. Component of the transition zone in primary cilia. Required for ciliogenesis. This chain is Transmembrane protein 237A (tmem237a), found in Danio rerio (Zebrafish).